The chain runs to 794 residues: Ent-kaurene synthase 1, chloroplastic (794 aa).

Residues 1–28 (MSLLLSNSVLVGPKFRSSRISHASASLD) constitute a chloroplast transit peptide. 4 residues coordinate Mg(2+): D543, D547, N687, and E695. The DDXXD motif signature appears at 543 to 547 (DDFFD).

This sequence belongs to the terpene synthase family. The cofactor is Mg(2+). In terms of tissue distribution, accumulates in leaves, and, at low levels, in germinating seeds.

Its subcellular location is the plastid. It is found in the chloroplast. The enzyme catalyses ent-copalyl diphosphate = ent-kaur-16-ene + diphosphate. It participates in secondary metabolite biosynthesis; terpenoid biosynthesis. Its pathway is plant hormone biosynthesis; gibberellin biosynthesis. Involved in the biosynthesis of ent-kaurene diterpenoids natural products such as oridonin, miltiradiene, eriocalyxin B and nezukol, known to exhibit antitumor, anti-inflammatory and antibacterial activities, and in the production of gibberellins phytohormones. Catalyzes the conversion of ent-copalyl diphosphate (ent-CPP) to ent-kaurene. The polypeptide is Ent-kaurene synthase 1, chloroplastic (Isodon eriocalyx (Plectranthus eriocalyx)).